We begin with the raw amino-acid sequence, 391 residues long: Ectodysplasin-A (391 aa).

Positions 1–21 (MGYPEVERREPLPAAAPRERG) are enriched in basic and acidic residues. Residues 1–28 (MGYPEVERREPLPAAAPRERGSQGCGCR) form a disordered region. The Cytoplasmic portion of the chain corresponds to 1–41 (MGYPEVERREPLPAAAPRERGSQGCGCRGAPARAGEGNSCR). A helical; Signal-anchor for type II membrane protein membrane pass occupies residues 42-62 (LFLGFFGLSLALHLLTLCCYL). The Extracellular segment spans residues 63–391 (ELRSELRRER…AIRLGEAPAS (329 aa)). Disordered stretches follow at residues 72–129 (RGTE…DSQD) and 146–244 (YSEE…TGTR). Residues 86–96 (TSGTLSSPGSL) show a composition bias toward low complexity. Residues 180-229 (GPPGPNGPPGPPGPPGPQGPPGIPGIPGIPGTTVMGPPGPPGPPGPQGPP) form the Collagen-like domain. Pro residues-rich tracts occupy residues 181–203 (PPGPNGPPGPPGPPGPQGPPGIP) and 216–228 (PPGPPGPPGPQGP). Residues 249–385 (AVVHLQGQGS…HTTFFGAIRL (137 aa)) enclose the THD domain. An N-linked (GlcNAc...) asparagine glycan is attached at Asn313. Cys332 and Cys346 form a disulfide bridge. The N-linked (GlcNAc...) asparagine glycan is linked to Asn372.

It belongs to the tumor necrosis factor family. In terms of assembly, homotrimer. The homotrimers may then dimerize and form higher-order oligomers. Post-translationally, N-glycosylated. In terms of processing, processing by furin produces a secreted form.

It is found in the cell membrane. The protein localises to the secreted. In terms of biological role, cytokine which is involved in epithelial-mesenchymal signaling during morphogenesis of ectodermal organs. Functions as a ligand activating the DEATH-domain containing receptors EDAR and EDA2R. Isoform TAA binds only to the receptor EDAR, while isoform TA-A2 binds exclusively to the receptor EDA2R. May also play a role in cell adhesion. Functionally, isoform TAA binds only to the receptor EDAR, while isoform TA-A2 binds exclusively to the receptor EDA2R. Isoform TA-A2 binds exclusively to the receptor EDA2R. This chain is Ectodysplasin-A (Eda), found in Mus musculus (Mouse).